A 330-amino-acid polypeptide reads, in one-letter code: Olfactory receptor 5T9 (330 aa).

Topologically, residues Met-1 to Val-37 are extracellular. A glycan (N-linked (GlcNAc...) asparagine) is linked at Asn-17. Residues Leu-38–Val-58 traverse the membrane as a helical segment. Residues Leu-59 to Arg-66 are Cytoplasmic-facing. A helical transmembrane segment spans residues Leu-67–Thr-87. The Extracellular portion of the chain corresponds to Val-88–Thr-111. Cys-109 and Cys-201 are joined by a disulfide. Residues Glu-112–Tyr-132 traverse the membrane as a helical segment. Over Asp-133–Ala-145 the chain is Cytoplasmic. Residues Val-146–Met-166 form a helical membrane-spanning segment. Over His-167–Gln-208 the chain is Extracellular. A helical transmembrane segment spans residues Leu-209–Ser-229. Residues Tyr-230–Ile-249 are Cytoplasmic-facing. Residues Phe-250 to Met-270 traverse the membrane as a helical segment. Residues Tyr-271 to Asp-283 are Extracellular-facing. Residues Met-284–Leu-304 form a helical membrane-spanning segment. At Arg-305 to Leu-330 the chain is on the cytoplasmic side.

This sequence belongs to the G-protein coupled receptor 1 family.

The protein resides in the cell membrane. Functionally, potential odorant receptor. The polypeptide is Olfactory receptor 5T9 (Mus musculus (Mouse)).